Here is a 2264-residue protein sequence, read N- to C-terminus: Protein Ycf2 (2264 aa).

1611-1618 (GSIGTGRS) contributes to the ATP binding site.

Belongs to the Ycf2 family.

Its subcellular location is the plastid. It is found in the chloroplast stroma. Probable ATPase of unknown function. Its presence in a non-photosynthetic plant (Epifagus virginiana) and experiments in tobacco indicate that it has an essential function which is probably not related to photosynthesis. This chain is Protein Ycf2, found in Lactuca sativa (Garden lettuce).